Reading from the N-terminus, the 542-residue chain is Glutamyl-tRNA reductase 2, chloroplastic (542 aa).

Substrate-binding positions include 142–145 (TCNR), S202, 207–209 (EGQ), and Q213. C143 acts as the Nucleophile in catalysis. Position 284–289 (284–289 (GAGKMG)) interacts with NADP(+).

The protein belongs to the glutamyl-tRNA reductase family. Found in all tissues examined.

It localises to the plastid. It is found in the chloroplast. The catalysed reaction is (S)-4-amino-5-oxopentanoate + tRNA(Glu) + NADP(+) = L-glutamyl-tRNA(Glu) + NADPH + H(+). Its pathway is porphyrin-containing compound metabolism; protoporphyrin-IX biosynthesis; 5-aminolevulinate from L-glutamyl-tRNA(Glu): step 1/2. Catalyzes the NADPH-dependent reduction of glutamyl-tRNA(Glu) to glutamate 1-semialdehyde (GSA). The polypeptide is Glutamyl-tRNA reductase 2, chloroplastic (HEMA2) (Cucumis sativus (Cucumber)).